We begin with the raw amino-acid sequence, 267 residues long: 14-3-3-like protein GF14 phi (267 aa).

N-acetylalanine is present on alanine 2. A phosphoserine mark is found at serine 73 and serine 196. Threonine 217 carries the post-translational modification Phosphothreonine. Positions 244–267 are disordered; that stretch reads MQDESPEEIKEAAAPKPAEEQKEI. Phosphoserine is present on serine 248. Over residues 250–267 the composition is skewed to basic and acidic residues; that stretch reads EEIKEAAAPKPAEEQKEI.

Belongs to the 14-3-3 family. Interacts with FD. Interacts with CINV1.

The protein resides in the nucleus. Its subcellular location is the cytoplasm. Its function is as follows. Is associated with a DNA binding complex that binds to the G box, a well-characterized cis-acting DNA regulatory element found in plant genes. The sequence is that of 14-3-3-like protein GF14 phi (GRF4) from Arabidopsis thaliana (Mouse-ear cress).